A 54-amino-acid polypeptide reads, in one-letter code: ATP synthase F(0) complex subunit 8 (54 aa).

A helical membrane pass occupies residues 8-24; sequence PWFSIMLLTWFTFSLLI.

This sequence belongs to the ATPase protein 8 family. As to quaternary structure, component of the ATP synthase complex composed at least of ATP5F1A/subunit alpha, ATP5F1B/subunit beta, ATP5MC1/subunit c (homooctomer), MT-ATP6/subunit a, MT-ATP8/subunit 8, ATP5ME/subunit e, ATP5MF/subunit f, ATP5MG/subunit g, ATP5MK/subunit k, ATP5MJ/subunit j, ATP5F1C/subunit gamma, ATP5F1D/subunit delta, ATP5F1E/subunit epsilon, ATP5PF/subunit F6, ATP5PB/subunit b, ATP5PD/subunit d, ATP5PO/subunit OSCP. ATP synthase complex consists of a soluble F(1) head domain (subunits alpha(3) and beta(3)) - the catalytic core - and a membrane F(0) domain - the membrane proton channel (subunits c, a, 8, e, f, g, k and j). These two domains are linked by a central stalk (subunits gamma, delta, and epsilon) rotating inside the F1 region and a stationary peripheral stalk (subunits F6, b, d, and OSCP).

Its subcellular location is the mitochondrion membrane. In terms of biological role, subunit 8, of the mitochondrial membrane ATP synthase complex (F(1)F(0) ATP synthase or Complex V) that produces ATP from ADP in the presence of a proton gradient across the membrane which is generated by electron transport complexes of the respiratory chain. ATP synthase complex consist of a soluble F(1) head domain - the catalytic core - and a membrane F(1) domain - the membrane proton channel. These two domains are linked by a central stalk rotating inside the F(1) region and a stationary peripheral stalk. During catalysis, ATP synthesis in the catalytic domain of F(1) is coupled via a rotary mechanism of the central stalk subunits to proton translocation. In vivo, can only synthesize ATP although its ATP hydrolase activity can be activated artificially in vitro. Part of the complex F(0) domain. This chain is ATP synthase F(0) complex subunit 8, found in Gallus gallus (Chicken).